A 182-amino-acid polypeptide reads, in one-letter code: Endoribonuclease YbeY (182 aa).

3 residues coordinate Zn(2+): histidine 120, histidine 124, and histidine 130. The interval arginine 157–asparagine 182 is disordered.

Belongs to the endoribonuclease YbeY family. Zn(2+) is required as a cofactor.

Its subcellular location is the cytoplasm. Single strand-specific metallo-endoribonuclease involved in late-stage 70S ribosome quality control and in maturation of the 3' terminus of the 16S rRNA. This chain is Endoribonuclease YbeY, found in Corynebacterium jeikeium (strain K411).